Consider the following 128-residue polypeptide: Protein ApaG (128 aa).

The ApaG domain occupies 1 to 123 (MTSSPDITVS…FRLDIAPESG (123 aa)).

This chain is Protein ApaG, found in Deinococcus radiodurans (strain ATCC 13939 / DSM 20539 / JCM 16871 / CCUG 27074 / LMG 4051 / NBRC 15346 / NCIMB 9279 / VKM B-1422 / R1).